The chain runs to 251 residues: Probable metal-binding protein YrpE (251 aa).

An N-terminal signal peptide occupies residues methionine 1–alanine 30. Positions threonine 25 to alanine 41 are enriched in polar residues. The segment at threonine 25–glutamate 72 is disordered. A compositionally biased stretch (basic and acidic residues) spans serine 54–glutamate 72. Residues histidine 203, histidine 212, histidine 214, glutamate 247, and histidine 251 each contribute to the Zn(2+) site.

The protein belongs to the calycin superfamily. ZinT family.

The polypeptide is Probable metal-binding protein YrpE (yrpE) (Bacillus subtilis (strain 168)).